A 208-amino-acid polypeptide reads, in one-letter code: V-type ATP synthase subunit D (208 aa).

The protein belongs to the V-ATPase D subunit family.

Produces ATP from ADP in the presence of a proton gradient across the membrane. The sequence is that of V-type ATP synthase subunit D from Streptococcus pyogenes serotype M49 (strain NZ131).